Consider the following 124-residue polypeptide: Small ribosomal subunit protein uS12 (124 aa).

Position 89 is a 3-methylthioaspartic acid (D89). Residues 105–124 form a disordered region; it reads SGVSDRRQGRSKYGAKRPKS. The span at 113–124 shows a compositional bias: basic residues; it reads GRSKYGAKRPKS.

The protein belongs to the universal ribosomal protein uS12 family. As to quaternary structure, part of the 30S ribosomal subunit. Contacts proteins S8 and S17. May interact with IF1 in the 30S initiation complex.

Its function is as follows. With S4 and S5 plays an important role in translational accuracy. In terms of biological role, interacts with and stabilizes bases of the 16S rRNA that are involved in tRNA selection in the A site and with the mRNA backbone. Located at the interface of the 30S and 50S subunits, it traverses the body of the 30S subunit contacting proteins on the other side and probably holding the rRNA structure together. The combined cluster of proteins S8, S12 and S17 appears to hold together the shoulder and platform of the 30S subunit. This Colwellia psychrerythraea (strain 34H / ATCC BAA-681) (Vibrio psychroerythus) protein is Small ribosomal subunit protein uS12.